We begin with the raw amino-acid sequence, 340 residues long: Phenylalanine--tRNA ligase alpha subunit (340 aa).

Residue E255 coordinates Mg(2+).

It belongs to the class-II aminoacyl-tRNA synthetase family. Phe-tRNA synthetase alpha subunit type 1 subfamily. In terms of assembly, tetramer of two alpha and two beta subunits. It depends on Mg(2+) as a cofactor.

Its subcellular location is the cytoplasm. It catalyses the reaction tRNA(Phe) + L-phenylalanine + ATP = L-phenylalanyl-tRNA(Phe) + AMP + diphosphate + H(+). In Desulforamulus reducens (strain ATCC BAA-1160 / DSM 100696 / MI-1) (Desulfotomaculum reducens), this protein is Phenylalanine--tRNA ligase alpha subunit.